A 202-amino-acid chain; its full sequence is Superoxide dismutase [Mn/Fe] (202 aa).

4 residues coordinate Fe(3+): His27, His81, Asp163, and His167. Residues His27, His81, Asp163, and His167 each contribute to the Mn(2+) site.

It belongs to the iron/manganese superoxide dismutase family. The cofactor is Mn(2+). Fe(3+) is required as a cofactor.

The catalysed reaction is 2 superoxide + 2 H(+) = H2O2 + O2. Destroys superoxide anion radicals which are normally produced within the cells and which are toxic to biological systems. Catalyzes the dismutation of superoxide anion radicals into O2 and H2O2 by successive reduction and oxidation of the transition metal ion at the active site. This is Superoxide dismutase [Mn/Fe] (sodA) from Streptococcus agalactiae serotype V (strain ATCC BAA-611 / 2603 V/R).